The sequence spans 305 residues: Large ribosomal subunit protein uL10 (305 aa).

This sequence belongs to the universal ribosomal protein uL10 family. As to quaternary structure, P0 forms a pentameric complex by interaction with dimers of P1 and P2. In terms of processing, phosphorylated.

In terms of biological role, ribosomal protein P0 is the functional equivalent of E.coli protein L10. The sequence is that of Large ribosomal subunit protein uL10 (rplp0) from Dictyostelium discoideum (Social amoeba).